Consider the following 927-residue polypeptide: Solute carrier family 12 protein B0303.11 (927 aa).

The Cytoplasmic portion of the chain corresponds to 1 to 23; sequence MPSSTASSEDAPITSTAWMNWKD. The helical transmembrane segment at 24–44 threads the bilayer; sequence VFLKCVQPMLAVVLLLRFSSI. Residues 45 to 53 lie on the Extracellular side of the membrane; that stretch reads VDEAGFTTT. Residues 54–74 form a helical membrane-spanning segment; that stretch reads IILVFFTFLVSLVTGWSACTV. Residues 75 to 95 are Cytoplasmic-facing; it reads VSRKSSEVGFVKTMLAYSSTE. Residues 96–116 traverse the membrane as a helical segment; it reads FAISFSIIYLFCLLVATSTFL. The Extracellular segment spans residues 117-141; the sequence is TSAAEAVLHIFSTFSLELLDGATHD. The helical transmembrane segment at 142-159 threads the bilayer; that stretch reads LRLVSSVLSLITLALCMV. Over 160 to 165 the chain is Cytoplasmic; the sequence is RNRNAR. The helical transmembrane segment at 166-186 threads the bilayer; sequence FVRTFIFALTCIAIALQLSSV. Residues 187-212 are Extracellular-facing; the sequence is MFRYGEYQLRRVSDRNAMIPSPPNEE. The helical transmembrane segment at 213–233 threads the bilayer; it reads ISTIFAQLFPAAMCGLTILNI. Topologically, residues 234 to 244 are cytoplasmic; the sequence is GSKLQNTAPRG. A helical membrane pass occupies residues 245 to 265; it reads ALIAIAVSACFYGAAAMLDYV. The Extracellular segment spans residues 266–284; that stretch reads EFFARTSTSNSTGSAEYNE. N275 is a glycosylation site (N-linked (GlcNAc...) asparagine). Residues 285-305 traverse the membrane as a helical segment; the sequence is FLSYIYTTVPMAIVITLACVL. Residues 306-345 are Cytoplasmic-facing; sequence SAVSTLKYAAVILQSLGRSNQCRCILWLAKGFGERDIPIR. Residues 346–366 form a helical membrane-spanning segment; that stretch reads CLLLLSTVQILVSAIGSYDIL. Position 367 (C367) is a topological domain, extracellular. Residues 368-388 traverse the membrane as a helical segment; that stretch reads IPTTVFYLFAYALFNFYVFLV. Residues 389–394 lie on the Cytoplasmic side of the membrane; it reads KLSDPE. Residues 395 to 415 traverse the membrane as a helical segment; the sequence is IPSPPTLLSLAISAACFIASL. Over 416–419 the chain is Extracellular; it reads YTNR. The chain crosses the membrane as a helical span at residues 420–440; it reads HLALFIASIFAISYCSLLYII. At 441-927 the chain is on the cytoplasmic side; it reads RRERNEDGEE…SMSALRLKFP (487 aa).

Belongs to the SLC12A transporter family.

The protein localises to the cell membrane. In Caenorhabditis elegans, this protein is Solute carrier family 12 protein B0303.11.